The primary structure comprises 117 residues: Large ribosomal subunit protein bL19 (117 aa).

Belongs to the bacterial ribosomal protein bL19 family.

In terms of biological role, this protein is located at the 30S-50S ribosomal subunit interface and may play a role in the structure and function of the aminoacyl-tRNA binding site. This Azobacteroides pseudotrichonymphae genomovar. CFP2 protein is Large ribosomal subunit protein bL19.